A 586-amino-acid chain; its full sequence is Actin-related protein 9 (586 aa).

Positions 141–169 (STPIVDKDADVDPLQRSTPDDTEPNSEEN) are disordered.

This sequence belongs to the actin family. ARP8 subfamily.

The protein is Actin-related protein 9 (ARP9) of Oryza sativa subsp. indica (Rice).